We begin with the raw amino-acid sequence, 1402 residues long: DNA-directed RNA polymerase subunit beta' (1402 aa).

Zn(2+) contacts are provided by Cys-71, Cys-73, Cys-86, and Cys-89. 3 residues coordinate Mg(2+): Asp-462, Asp-464, and Asp-466. Residues Cys-811, Cys-885, Cys-892, and Cys-895 each contribute to the Zn(2+) site.

The protein belongs to the RNA polymerase beta' chain family. In terms of assembly, the RNAP catalytic core consists of 2 alpha, 1 beta, 1 beta' and 1 omega subunit. When a sigma factor is associated with the core the holoenzyme is formed, which can initiate transcription. Requires Mg(2+) as cofactor. It depends on Zn(2+) as a cofactor.

It carries out the reaction RNA(n) + a ribonucleoside 5'-triphosphate = RNA(n+1) + diphosphate. In terms of biological role, DNA-dependent RNA polymerase catalyzes the transcription of DNA into RNA using the four ribonucleoside triphosphates as substrates. The sequence is that of DNA-directed RNA polymerase subunit beta' from Bartonella henselae (strain ATCC 49882 / DSM 28221 / CCUG 30454 / Houston 1) (Rochalimaea henselae).